The primary structure comprises 408 residues: Aminopeptidase T (408 aa).

A divalent metal cation-binding residues include E250, E316, E340, H345, H376, and D378.

This sequence belongs to the peptidase M29 family. Homodimer. It depends on Co(2+) as a cofactor. Requires Zn(2+) as cofactor. The cofactor is Mg(2+).

Metal-dependent exopeptidase. The protein is Aminopeptidase T of Thermus thermophilus (strain ATCC 27634 / DSM 579 / HB8).